A 198-amino-acid polypeptide reads, in one-letter code: Probable GTP-binding protein EngB (198 aa).

Residues aspartate 22 to threonine 195 form the EngB-type G domain. Residues glycine 30 to serine 37, glycine 57 to threonine 61, aspartate 75 to glycine 78, threonine 142 to aspartate 145, and phenylalanine 174 to serine 176 contribute to the GTP site. Mg(2+)-binding residues include serine 37 and threonine 59.

It belongs to the TRAFAC class TrmE-Era-EngA-EngB-Septin-like GTPase superfamily. EngB GTPase family. Mg(2+) serves as cofactor.

In terms of biological role, necessary for normal cell division and for the maintenance of normal septation. The chain is Probable GTP-binding protein EngB from Bacillus cytotoxicus (strain DSM 22905 / CIP 110041 / 391-98 / NVH 391-98).